The sequence spans 291 residues: ATP synthase gamma chain (291 aa).

The protein belongs to the ATPase gamma chain family. In terms of assembly, F-type ATPases have 2 components, CF(1) - the catalytic core - and CF(0) - the membrane proton channel. CF(1) has five subunits: alpha(3), beta(3), gamma(1), delta(1), epsilon(1). CF(0) has three main subunits: a, b and c.

It localises to the cell inner membrane. Its function is as follows. Produces ATP from ADP in the presence of a proton gradient across the membrane. The gamma chain is believed to be important in regulating ATPase activity and the flow of protons through the CF(0) complex. The polypeptide is ATP synthase gamma chain (Syntrophus aciditrophicus (strain SB)).